We begin with the raw amino-acid sequence, 1067 residues long: SURP and G-patch domain-containing protein 2 (1067 aa).

A Phosphoserine modification is found at serine 93. Over residues 177–189 (KESRDYDLDHPGE) the composition is skewed to basic and acidic residues. Residues 177 to 199 (KESRDYDLDHPGEVDSVSRSSGQ) form a disordered region. Serine 206 carries the post-translational modification Phosphoserine. Residue lysine 219 forms a Glycyl lysine isopeptide (Lys-Gly) (interchain with G-Cter in SUMO2) linkage. At threonine 265 the chain carries Phosphothreonine. Phosphoserine is present on residues serine 267 and serine 586. The SURP motif 1 repeat unit spans residues 573–616 (IDQLVMRVIQGRLSPRERTLLLQDPAYWFLSDESSLEYKYYKLK). The disordered stretch occupies residues 668-767 (SQGPRGLKAK…CPSANMDAKT (100 aa)). Residues 680-691 (TTAQQTSLSSGT) show a composition bias toward polar residues. Serine 740 carries the phosphoserine modification. A Phosphothreonine modification is found at threonine 744. Residues 770–813 (TAEKLARFVAQVGPEIEQFSIENSTDNPDLWFLHDQSSSAFKFY) form an SURP motif 2 repeat. Polar residues predominate over residues 825–840 (SFQSTGEAGDSVQSPT). Disordered regions lie at residues 825–944 (SFQS…KSLK) and 967–991 (RIAY…EFSQ). The residue at position 838 (serine 838) is a Phosphoserine. The segment covering 843 to 856 (KEGKGEPQEGHPEQ) has biased composition (basic and acidic residues). A compositionally biased stretch (acidic residues) spans 866 to 883 (LPEEEEEDEEESEDEGGE). A compositionally biased stretch (polar residues) spans 919–931 (ASTPGLSQASSGS). The segment covering 975–984 (GRPIAKKKKP) has biased composition (basic residues). The short motif at 980–985 (KKKKPK) is the Nuclear localization signal element. The region spanning 996-1042 (DKNVGFQMLQKMGWKEGHGLGSLGKGIREPVSVGALSEGEGLGADGP) is the G-patch domain.

Its subcellular location is the nucleus. Functionally, may play a role in mRNA splicing. The protein is SURP and G-patch domain-containing protein 2 (Sugp2) of Mus musculus (Mouse).